The sequence spans 467 residues: Serine/threonine-protein kinase AFC1 (467 aa).

A Protein kinase domain is found at 115–443; the sequence is YQILSKMGEG…AREALNHPFF (329 aa). Residues 121–129 and lysine 144 contribute to the ATP site; that span reads MGEGTFGQV. The Proton acceptor role is filled by aspartate 240. The disordered stretch occupies residues 447 to 467; sequence REQSIPPFNPNPHPFLYNQKN.

This sequence belongs to the protein kinase superfamily. CMGC Ser/Thr protein kinase family. Lammer subfamily.

The catalysed reaction is L-seryl-[protein] + ATP = O-phospho-L-seryl-[protein] + ADP + H(+). It catalyses the reaction L-threonyl-[protein] + ATP = O-phospho-L-threonyl-[protein] + ADP + H(+). It carries out the reaction L-tyrosyl-[protein] + ATP = O-phospho-L-tyrosyl-[protein] + ADP + H(+). Activator of yeast transcription factor, STE12. In Arabidopsis thaliana (Mouse-ear cress), this protein is Serine/threonine-protein kinase AFC1 (AFC1).